A 202-amino-acid polypeptide reads, in one-letter code: Ras-related protein ORAB-1 (202 aa).

GTP-binding positions include 15–23 (GDSGVGKSC), 33–40 (YTESYIST), 63–67 (DTAGQ), 121–124 (NKCD), and 151–153 (SAK). The short motif at 37-45 (YISTIGVDF) is the Effector region element. The disordered stretch occupies residues 173 to 202 (MGPGATSGGSEKSNVNIQSTPVKSSGGGCC). Over residues 180–195 (GGSEKSNVNIQSTPVK) the composition is skewed to polar residues. Residues Cys-201 and Cys-202 are each lipidated (S-geranylgeranyl cysteine).

It belongs to the small GTPase superfamily. Rab family.

The protein localises to the cell membrane. Functionally, protein transport. Probably involved in vesicular traffic. In Diplobatis ommata (Ocellated electric ray), this protein is Ras-related protein ORAB-1.